Reading from the N-terminus, the 219-residue chain is Dehydration-responsive element-binding protein 1E (219 aa).

Over residues 1-19 (MEWAYYGSGYSSSGTPSPV) the composition is skewed to low complexity. Positions 1-44 (MEWAYYGSGYSSSGTPSPVGGDGDEDSYMTVSSAPPKRRAGRTK) are disordered. The AP2/ERF DNA-binding region spans 52–109 (VYKGVRSRNPGRWVCEVREPHGKQRIWLGTFETAEMAARAHDVAAMALRGRAACLNFA).

This sequence belongs to the AP2/ERF transcription factor family. ERF subfamily.

It localises to the nucleus. Functionally, transcriptional activator that binds specifically to the DNA sequence 5'-[AG]CCGAC-3'. Binding to the C-repeat/DRE element mediates high salinity- and dehydration-inducible transcription. The protein is Dehydration-responsive element-binding protein 1E (DREB1E) of Oryza sativa subsp. indica (Rice).